The sequence spans 414 residues: Eukaryotic initiation factor 4A-3 (414 aa).

The residue at position 2 (A2) is an N-acetylalanine. The Q motif motif lies at 41–69 (DSFDAMELQPDLLRGIYAYGFEKPSAIQQ). The 171-residue stretch at 72–242 (IIPFCKGLDV…RKFMNKPVRI (171 aa)) folds into the Helicase ATP-binding domain. 85–92 (AQSGTGKT) serves as a coordination point for ATP. S106 bears the Phosphoserine mark. A Phosphothreonine modification is found at T147. The short motif at 190–193 (DEAD) is the DEAD box element. Residues 253 to 414 (GIKQFYVNVD…ELPSNVADLL (162 aa)) enclose the Helicase C-terminal domain.

The protein belongs to the DEAD box helicase family. eIF4A subfamily. EIF4F is a multi-subunit complex, the composition of which varies with external and internal environmental conditions. It is composed of at least EIF4A, EIF4E and EIF4G.

It is found in the cytoplasm. It catalyses the reaction ATP + H2O = ADP + phosphate + H(+). Functionally, ATP-dependent RNA helicase which is a subunit of the eIF4F complex involved in cap recognition and is required for mRNA binding to ribosome. In the current model of translation initiation, eIF4A unwinds RNA secondary structures in the 5'-UTR of mRNAs which is necessary to allow efficient binding of the small ribosomal subunit, and subsequent scanning for the initiator codon. The protein is Eukaryotic initiation factor 4A-3 (TIF4A-3) of Arabidopsis thaliana (Mouse-ear cress).